A 217-amino-acid polypeptide reads, in one-letter code: Ribosomal RNA small subunit methyltransferase G (217 aa).

Residues glycine 78, phenylalanine 83, 129-130, and arginine 146 contribute to the S-adenosyl-L-methionine site; that span reads AE.

The protein belongs to the methyltransferase superfamily. RNA methyltransferase RsmG family.

It localises to the cytoplasm. It catalyses the reaction guanosine(527) in 16S rRNA + S-adenosyl-L-methionine = N(7)-methylguanosine(527) in 16S rRNA + S-adenosyl-L-homocysteine. In terms of biological role, specifically methylates the N7 position of guanine in position 527 of 16S rRNA. This chain is Ribosomal RNA small subunit methyltransferase G, found in Geobacter sp. (strain M21).